A 1071-amino-acid polypeptide reads, in one-letter code: Carbamoyl phosphate synthase pyrimidine-specific large chain (1071 aa).

A carboxyphosphate synthetic domain region spans residues M1–E401. ATP-binding residues include R129, R169, G175, G176, K208, I210, E215, G241, I242, H243, Q284, and E298. One can recognise an ATP-grasp 1 domain in the interval R133–V327. Residues Q284, E298, and N300 each coordinate Mg(2+). Residues Q284, E298, and N300 each contribute to the Mn(2+) site. The interval A402–S546 is oligomerization domain. The interval V547–G929 is carbamoyl phosphate synthetic domain. In terms of domain architecture, ATP-grasp 2 spans E671–L861. 10 residues coordinate ATP: R707, R746, L748, E752, G777, V778, H779, S780, Q820, and E832. Residues Q820, E832, and N834 each coordinate Mg(2+). The Mn(2+) site is built by Q820, E832, and N834. An MGS-like domain is found at I930–I1071. The allosteric domain stretch occupies residues I930 to I1071.

Belongs to the CarB family. In terms of assembly, composed of two chains; the small (or glutamine) chain promotes the hydrolysis of glutamine to ammonia, which is used by the large (or ammonia) chain to synthesize carbamoyl phosphate. Tetramer of heterodimers (alpha,beta)4. Interacts with BrxC. Mg(2+) is required as a cofactor. The cofactor is Mn(2+).

It catalyses the reaction hydrogencarbonate + L-glutamine + 2 ATP + H2O = carbamoyl phosphate + L-glutamate + 2 ADP + phosphate + 2 H(+). The enzyme catalyses hydrogencarbonate + NH4(+) + 2 ATP = carbamoyl phosphate + 2 ADP + phosphate + 2 H(+). Its pathway is amino-acid biosynthesis; L-arginine biosynthesis; carbamoyl phosphate from bicarbonate: step 1/1. It functions in the pathway pyrimidine metabolism; UMP biosynthesis via de novo pathway; (S)-dihydroorotate from bicarbonate: step 1/3. Its function is as follows. Small subunit of the glutamine-dependent carbamoyl phosphate synthetase (CPSase). CPSase catalyzes the formation of carbamoyl phosphate from the ammonia moiety of glutamine, carbonate, and phosphate donated by ATP, constituting the first step of the biosynthetic pathway leading to pyrimidine nucleotides. The large subunit (synthetase) binds the substrates ammonia (free or transferred from glutamine from the small subunit), hydrogencarbonate and ATP and carries out an ATP-coupled ligase reaction, activating hydrogencarbonate by forming carboxy phosphate which reacts with ammonia to form carbamoyl phosphate. The polypeptide is Carbamoyl phosphate synthase pyrimidine-specific large chain (pyrAB) (Bacillus subtilis (strain 168)).